Consider the following 72-residue polypeptide: Translation initiation factor IF-1 (72 aa).

The 72-residue stretch at 1–72 (MAKEETIQMQ…TRARITFRTK (72 aa)) folds into the S1-like domain.

The protein belongs to the IF-1 family. Component of the 30S ribosomal translation pre-initiation complex which assembles on the 30S ribosome in the order IF-2 and IF-3, IF-1 and N-formylmethionyl-tRNA(fMet); mRNA recruitment can occur at any time during PIC assembly.

The protein resides in the cytoplasm. One of the essential components for the initiation of protein synthesis. Stabilizes the binding of IF-2 and IF-3 on the 30S subunit to which N-formylmethionyl-tRNA(fMet) subsequently binds. Helps modulate mRNA selection, yielding the 30S pre-initiation complex (PIC). Upon addition of the 50S ribosomal subunit IF-1, IF-2 and IF-3 are released leaving the mature 70S translation initiation complex. The protein is Translation initiation factor IF-1 of Nitrosomonas eutropha (strain DSM 101675 / C91 / Nm57).